A 639-amino-acid chain; its full sequence is E3 ubiquitin-protein ligase HEL2 (639 aa).

The tract at residues 1–55 (MSESVKENVTPTRNFRRTQGPQNNTKPHNDRKNFRRKQKKNNLSAEPNLTTSSAD) is disordered. Ser-2 is modified (N-acetylserine). Polar residues-rich tracts occupy residues 7 to 26 (ENVT…NNTK) and 43 to 54 (LSAEPNLTTSSA). Thr-57 is modified (phosphothreonine). The RING-type zinc finger occupies 64-104 (CVICARKLTYVSLTPCHHKTCHICGFRQRALYNKKSCLICR). The 71-residue stretch at 222-292 (PMCAFCSGKR…QTCLDNKFVV (71 aa)) folds into the LIM zinc-binding domain. A compositionally biased stretch (low complexity) spans 343–354 (SISSLPGSSSGS). Disordered stretches follow at residues 343 to 367 (SISS…PEES) and 550 to 631 (LESK…GKQK). Position 354 is a phosphoserine (Ser-354).

This sequence belongs to the ZNF598/HEL2 family. Interacts with the E2 ubiquitin-conjugating enzyme UBC4. Interacts with histones H3 and H4.

It is found in the cytoplasm. It carries out the reaction S-ubiquitinyl-[E2 ubiquitin-conjugating enzyme]-L-cysteine + [acceptor protein]-L-lysine = [E2 ubiquitin-conjugating enzyme]-L-cysteine + N(6)-ubiquitinyl-[acceptor protein]-L-lysine.. Its pathway is protein modification; protein ubiquitination. E3 ubiquitin-protein ligase that plays a key role in the ribosome quality control (RQC), a pathway that takes place when a ribosome has stalled during translation, leading to degradation of nascent peptide chains. HEL2 is activated when ribosomes are stalled within an mRNA following translation of prematurely polyadenylated mRNAs. Acts as a ribosome collision sensor: specifically recognizes and binds collided ribosome and ubiquitinates the 40S ribosomal proteins RPS20/uS10 and RPS3/uS3. Catalyzes 'Lys-63'-linked polyubiquitination of RPS20/uS10, promoting recruitment of the RQT (ribosome quality control trigger) complex, which drives the disassembly of stalled ribosomes, followed by degradation of nascent peptides. HEL2 also acts as an activator of the No-Go decay (NGD) pathway by mediating polyubiquitination of monoubiquitinated RPS3/uS3 and RPS7/es7: RPS3/uS3 and RPS7/es7 are first monoubiquitinated by MAG2 and MOT2/NOT4, respectively, and HEL2 mediates formation of 'Lys-63'-linked polyubiquitin chains on monoubiquitin, leading to activation of the NGD pathway in a CUE2-mediated endonucleolytic cleavage. Polyubiquitination of RPS3/uS3 also triggers degradation of non-functional 18S rRNA. The RQC pathway and the integrated stress response (ISR) antagonize each other: HEL2 prevents the activation of GCN2, while GCN2 suppresses RQC activation. The RQC pathway functions as a preventive quality control in the secretory pathway: HEL2 binds preferentially to the pre-engaged secretory ribosome-nascent chain complexes and prevents mistargeting of secretory proteins into mitochondria. Independently of its role in RQC, also involved in the polyubiquitination and proteasomal-degradation of excess histone proteins. The sequence is that of E3 ubiquitin-protein ligase HEL2 from Saccharomyces cerevisiae (strain ATCC 204508 / S288c) (Baker's yeast).